The following is a 449-amino-acid chain: Delta(8)-fatty-acid desaturase 2 (449 aa).

Residues 7-91 (KRYVTSEDLK…VRDHHVSDVS (85 aa)) form the Cytochrome b5 heme-binding domain. Heme is bound by residues H42 and H65. Transmembrane regions (helical) follow at residues 113-133 (VTLY…YGVL) and 138-158 (IWAH…SAYV). Residues 160–164 (HDSGH) carry the Histidine box-1 motif. The helical transmembrane segment at 176 to 196 (LIQLLSGNCLTGISIAWWKWT) threads the bilayer. The short motif at 197 to 201 (HNAHH) is the Histidine box-2 element. 3 consecutive transmembrane segments (helical) span residues 255 to 275 (FYPV…LLLF), 284 to 304 (ALNI…VSFL), and 311 to 331 (FIFV…FCLN). The short motif at 374-378 (QLEHH) is the Histidine box-3 element.

The protein belongs to the fatty acid desaturase type 1 family. It depends on Fe cation as a cofactor. Highly expressed in flowers and siliques. Expressed at low levels in roots, leaves and stems.

The protein localises to the endoplasmic reticulum membrane. It carries out the reaction an N-acyl-(4R)-4-hydroxysphinganine + 2 Fe(II)-[cytochrome b5] + O2 + 2 H(+) = a (4R,8E)-4-hydroxysphingenine ceramide + 2 Fe(III)-[cytochrome b5] + 2 H2O. The catalysed reaction is an N-acyl-(4R)-4-hydroxysphinganine + 2 Fe(II)-[cytochrome b5] + O2 + 2 H(+) = a (4R,8Z)-4-hydroxysphing-8-enine ceramide + 2 Fe(III)-[cytochrome b5] + 2 H2O. Its function is as follows. Plays a major role as delta(8)-fatty-acid desaturase which introduces a double bond at the 8-position in the long-chain base (LCB) of ceramides with or without a hydroxy group at the 4-position. The enzyme produces both the 8E and 8Z isomers (in a 4:1 ratio). This structural modification contributes to the quantitative partitioning of ceramides between the two major sphingolipid classes, glucosylceramides and glycosylinositolphosphoryl ceramides. Sphingolipids are important membrane components involved in environmental stress responses, such as resistance to chilling, and act as cell signaling molecules. This chain is Delta(8)-fatty-acid desaturase 2 (SLD2), found in Arabidopsis thaliana (Mouse-ear cress).